The sequence spans 443 residues: Diels-Alderase poxQ (443 aa).

The N-terminal stretch at 1–23 (MARIPLEFLSITLPVLLLAYCLA) is a signal peptide. N-linked (GlcNAc...) asparagine glycosylation is found at asparagine 78, asparagine 97, and asparagine 145.

This sequence belongs to the Diels-Alderase family.

Its pathway is secondary metabolite biosynthesis. Functionally, diels-Alderase; part of the gene cluster that mediates the biosynthesis of oxaleimides, cytotoxic compounds containing an unusual disubstituted succinimide moiety. The first step of the pathway is provided by the HR-PKS poxF that serves in a new mode of collaborative biosynthesis with the PKS-NRPS poxE, by providing the olefin containing amino acid substrate via the synthesis of an ACP-bound dec-4-enoate. The cytochrome P450 monooxygenase poxM-catalyzed oxidation at the alpha-position creates the enzyme-bound 2-hydroxydec-4-enoyl-ACP thioester, which may be prone to spontaneous hydrolysis to yield 2-hydroxydec-4-enoic acid due to increased electrophilicity of the carbonyl. 2-hydroxydec-4-enoic acid can then be further oxidized by poxM to yield the alpha-ketoacid 2-oxodec-4-enoicacid, which is reductively aminated by the aminotransferase poxL to yield (S,E)-2-aminodec-4-enoic acid. The Hybrid PKS-NRPS synthetase poxE then performs condensation between the octaketide product of its PKS modules and the amino group of (S,E)-2-aminodec-4-enoic acid which is activated and incorporated by the adenylation domain. The resulting aminoacyl product can be cyclized by the Diels-Alderase PoxQ and reductively released by the reductive (R) domain of poxE to yield an aldehyde intermediate. The released aldehyde is then substrate for a Knoevenagel condensation by the hydrolyase poxO followed by an oxidation at the 5-position of the pyrrolidone ring. The presence of the olefin from the amino acid building block allows for migration of the substituted allyl group to occur. This allylic transposition reaction takes place in a conjugate addition, semipinacol-like fashion to yield a succinimide intermediate. Iterative two-electron oxidations of the C7 methyl of the succinimide intermediate to the carboxylic acid can be catalyzed by one of two remaining cytochrome P450 monooxygenasess poxC or poxD to yield oxaleimide A. Subsequent oxidation yields the maleimide scaffold oxaleimide I. Both oxaleimide A and oxaleimide I can undergo oxidative modifications in the decalin ring to yield the series of products oxaleimides B to H. The sequence is that of Diels-Alderase poxQ from Penicillium oxalicum (strain 114-2 / CGMCC 5302) (Penicillium decumbens).